We begin with the raw amino-acid sequence, 228 residues long: Large ribosomal subunit protein uL3 (228 aa).

Residue glutamine 151 is modified to N5-methylglutamine.

This sequence belongs to the universal ribosomal protein uL3 family. In terms of assembly, part of the 50S ribosomal subunit. Forms a cluster with proteins L14 and L19. Post-translationally, methylated by PrmB.

In terms of biological role, one of the primary rRNA binding proteins, it binds directly near the 3'-end of the 23S rRNA, where it nucleates assembly of the 50S subunit. In Rhizobium meliloti (strain 1021) (Ensifer meliloti), this protein is Large ribosomal subunit protein uL3.